Here is a 270-residue protein sequence, read N- to C-terminus: MGNTSSERAALDRQGGHKTPRRDSSGGSKDGDRPKILMDSPEDADLFHSEEIKAPEKEEFLAWQHDLEVNDKAPAQARPTVFRWTGGGKEVYLSGSFNNWSKLPLTRSHNNFVAILDLPEGEHQYKFFVDGQWTHDPSEPVVTSQLGTVNNVIQVKKTDFEVFDALMVDSQKCSDVSELSSSPPGPYHQEPYISKPEERFKAPPILPPHLLQVILNKDTGISCDPALLPEPNHVMLNHLYALSIKDGVMVLSATHRYKKKYVTTLLYKPI.

The segment at 1-44 is disordered; sequence MGNTSSERAALDRQGGHKTPRRDSSGGSKDGDRPKILMDSPEDA. Glycine 2 carries N-myristoyl glycine lipidation. Position 4 is a phosphothreonine (threonine 4). 2 positions are modified to phosphoserine: serine 5 and serine 6. The segment covering 9 to 36 has biased composition (basic and acidic residues); that stretch reads AALDRQGGHKTPRRDSSGGSKDGDRPKI. A Phosphothreonine modification is found at threonine 19. Residues serine 24 and serine 25 each carry the phosphoserine; by autocatalysis modification. Residues serine 40, serine 96, and serine 101 each carry the phosphoserine modification. Positions 68–163 are glycogen-binding domain; sequence EVNDKAPAQA…QVKKTDFEVF (96 aa). Position 108 is a phosphoserine; by autocatalysis (serine 108). Threonine 148 carries the phosphothreonine modification. Phosphoserine is present on serine 182. Residue lysine 201 is modified to N6-succinyllysine.

It belongs to the 5'-AMP-activated protein kinase beta subunit family. As to quaternary structure, AMPK is a heterotrimer of an alpha catalytic subunit (PRKAA1 or PRKAA2), a beta (PRKAB1 or PRKAB2) and a gamma non-catalytic subunits (PRKAG1, PRKAG2 or PRKAG3). Interacts with FNIP1 and FNIP2. Phosphorylated when associated with the catalytic subunit (PRKAA1 or PRKAA2). Phosphorylated by ULK1; leading to negatively regulate AMPK activity and suggesting the existence of a regulatory feedback loop between ULK1 and AMPK.

Non-catalytic subunit of AMP-activated protein kinase (AMPK), an energy sensor protein kinase that plays a key role in regulating cellular energy metabolism. In response to reduction of intracellular ATP levels, AMPK activates energy-producing pathways and inhibits energy-consuming processes: inhibits protein, carbohydrate and lipid biosynthesis, as well as cell growth and proliferation. AMPK acts via direct phosphorylation of metabolic enzymes, and by longer-term effects via phosphorylation of transcription regulators. Also acts as a regulator of cellular polarity by remodeling the actin cytoskeleton; probably by indirectly activating myosin. Beta non-catalytic subunit acts as a scaffold on which the AMPK complex assembles, via its C-terminus that bridges alpha (PRKAA1 or PRKAA2) and gamma subunits (PRKAG1, PRKAG2 or PRKAG3). This chain is 5'-AMP-activated protein kinase subunit beta-1 (PRKAB1), found in Bos taurus (Bovine).